The primary structure comprises 431 residues: Glucose-1-phosphate adenylyltransferase (431 aa).

Alpha-D-glucose 1-phosphate-binding positions include tyrosine 109, glycine 175, 190-191 (EK), and serine 208.

Belongs to the bacterial/plant glucose-1-phosphate adenylyltransferase family. As to quaternary structure, homotetramer.

It catalyses the reaction alpha-D-glucose 1-phosphate + ATP + H(+) = ADP-alpha-D-glucose + diphosphate. The protein operates within glycan biosynthesis; glycogen biosynthesis. Functionally, involved in the biosynthesis of ADP-glucose, a building block required for the elongation reactions to produce glycogen. Catalyzes the reaction between ATP and alpha-D-glucose 1-phosphate (G1P) to produce pyrophosphate and ADP-Glc. This chain is Glucose-1-phosphate adenylyltransferase, found in Alteromonas mediterranea (strain DSM 17117 / CIP 110805 / LMG 28347 / Deep ecotype).